Reading from the N-terminus, the 175-residue chain is Peptide methionine sulfoxide reductase MsrA (175 aa).

Cys-10 is a catalytic residue.

Belongs to the MsrA Met sulfoxide reductase family.

It carries out the reaction L-methionyl-[protein] + [thioredoxin]-disulfide + H2O = L-methionyl-(S)-S-oxide-[protein] + [thioredoxin]-dithiol. The enzyme catalyses [thioredoxin]-disulfide + L-methionine + H2O = L-methionine (S)-S-oxide + [thioredoxin]-dithiol. Its function is as follows. Has an important function as a repair enzyme for proteins that have been inactivated by oxidation. Catalyzes the reversible oxidation-reduction of methionine sulfoxide in proteins to methionine. The chain is Peptide methionine sulfoxide reductase MsrA from Clavibacter sepedonicus (Clavibacter michiganensis subsp. sepedonicus).